Consider the following 364-residue polypeptide: Fructose-bisphosphate aldolase C-A (364 aa).

Residues Arg-56 and Lys-147 each coordinate substrate. Glu-188 serves as the catalytic Proton acceptor. Residue Lys-230 is the Schiff-base intermediate with dihydroxyacetone-P of the active site.

This sequence belongs to the class I fructose-bisphosphate aldolase family. As to quaternary structure, homotetramer. In terms of tissue distribution, expressed specifically in Purkinje cells in the brain.

The enzyme catalyses beta-D-fructose 1,6-bisphosphate = D-glyceraldehyde 3-phosphate + dihydroxyacetone phosphate. It functions in the pathway carbohydrate degradation; glycolysis; D-glyceraldehyde 3-phosphate and glycerone phosphate from D-glucose: step 4/4. The protein is Fructose-bisphosphate aldolase C-A of Danio rerio (Zebrafish).